The sequence spans 283 residues: ATP synthase gamma chain (283 aa).

It belongs to the ATPase gamma chain family. As to quaternary structure, F-type ATPases have 2 components, CF(1) - the catalytic core - and CF(0) - the membrane proton channel. CF(1) has five subunits: alpha(3), beta(3), gamma(1), delta(1), epsilon(1). CF(0) has three main subunits: a, b and c.

Its subcellular location is the cell membrane. In terms of biological role, produces ATP from ADP in the presence of a proton gradient across the membrane. The gamma chain is believed to be important in regulating ATPase activity and the flow of protons through the CF(0) complex. In Clostridium perfringens (strain ATCC 13124 / DSM 756 / JCM 1290 / NCIMB 6125 / NCTC 8237 / Type A), this protein is ATP synthase gamma chain.